The sequence spans 277 residues: Phosphatidylglycerol--prolipoprotein diacylglyceryl transferase (277 aa).

7 helical membrane passes run 21-41 (LAVR…LWLA), 60-80 (LLFA…VLFY), 95-115 (VWTG…AMLW), 124-144 (FFTI…AGRL), 176-196 (SQLY…NWFI), 203-223 (GTVS…VEYV), and 239-259 (MGQI…LWAF). A 1,2-diacyl-sn-glycero-3-phospho-(1'-sn-glycerol) is bound at residue R143.

The protein belongs to the Lgt family.

Its subcellular location is the cell inner membrane. The catalysed reaction is L-cysteinyl-[prolipoprotein] + a 1,2-diacyl-sn-glycero-3-phospho-(1'-sn-glycerol) = an S-1,2-diacyl-sn-glyceryl-L-cysteinyl-[prolipoprotein] + sn-glycerol 1-phosphate + H(+). It participates in protein modification; lipoprotein biosynthesis (diacylglyceryl transfer). Catalyzes the transfer of the diacylglyceryl group from phosphatidylglycerol to the sulfhydryl group of the N-terminal cysteine of a prolipoprotein, the first step in the formation of mature lipoproteins. This Aliivibrio fischeri (strain ATCC 700601 / ES114) (Vibrio fischeri) protein is Phosphatidylglycerol--prolipoprotein diacylglyceryl transferase.